A 431-amino-acid polypeptide reads, in one-letter code: Transposase for insertion sequence element IS232 (431 aa).

The 60-residue stretch at 20–79 folds into the HTH IS21-type domain; that stretch reads PNFKKLMGNLKMKINKSQLARELNVDRRTIDKYLNGFTPKGTKNKTSKIDTYYEVIAALL. A DNA-binding region (H-T-H motif) is located at residues 35-54; the sequence is KSQLARELNVDRRTIDKYLN. Residues 140–315 enclose the Integrase catalytic domain; it reads YETPPGEQAQ…IPVFALKQEK (176 aa).

It belongs to the transposase IS21/IS408/IS1162 family.

Functionally, involved in the transposition of the insertion sequence. This is Transposase for insertion sequence element IS232 from Bacillus thuringiensis subsp. berliner.